We begin with the raw amino-acid sequence, 542 residues long: MPENVAPRTGPPAGAAGAAGGRGKSAYQDRDKPAQIRFSNISAAKAVADAIRTSLGPKGMDKMIQDGKGDVTITNDGATILKQMQVLHPAARMLVELSKAQDIEAGDGTTSVVIIAGSLLDSCTKLLQKGIHPTIISESFQKALEKGIEILTDMSRPEELSDRETLLNSAATSLNSKVVSQYSSLLSPMSVDAVMKVIDPATATSVDLRDIKIVKKLGGTIDDCELVEGLVLTQKVANSGITRVEKAKIGLIQFCLSAPKTDMDNQIVVSDYVQMDRVLREERAYILNLVKQIKKTGCNVLLIQKSILRDALSDLALHFLNKMKIMVVKDIEREDIEFICKTIGTKPVAHVDQFTADMLGSAELAEEVSLNGSGKLIKITGCASPGKTVTIVVRGSNKLVIEEAERSIHDALCVIRCLVKKRALIAGGGAPEIELALRLTEYSRTLSGMESYCIRAFADAMEVIPSTLAENAGLNPISTVTELRNRHAQGEKTTGINVRKGGISNILEEQVVQPLLVSVSALTLATETVRSILKIDDVVNTR.

A compositionally biased stretch (low complexity) spans 1-16 (MPENVAPRTGPPAGAA). The tract at residues 1–31 (MPENVAPRTGPPAGAAGAAGGRGKSAYQDRD) is disordered. The residue at position 22 (Arg22) is an Omega-N-methylarginine. Lys24 carries the N6-acetyllysine modification. Ser39 carries the phosphoserine modification. Gly56 is a binding site for ADP. Gly56 contacts ATP. A Mg(2+)-binding site is contributed by Asp107. ADP-binding residues include Gly108, Thr109, Thr110, Ser111, Asn175, Ser176, and Lys177. Residues Gly108 and Thr109 each coordinate ATP. An ATP-binding site is contributed by Lys177. 2 positions are modified to phosphoserine: Ser187 and Ser205. An N6-acetyllysine mark is found at Lys291, Lys305, Lys322, and Lys329. Gly428 lines the ADP pocket. Phosphoserine is present on Ser447. An ADP-binding site is contributed by Gln513.

The protein belongs to the TCP-1 chaperonin family. As to quaternary structure, component of the chaperonin-containing T-complex (TRiC), a hexadecamer composed of two identical back-to-back stacked rings enclosing a protein folding chamber. Each ring is made up of eight different subunits: TCP1/CCT1, CCT2, CCT3, CCT4, CCT5, CCT6A/CCT6, CCT7, CCT8. Interacts with PACRG. Interacts with DNAAF4. Interacts with DLEC1.

The protein resides in the cytoplasm. The protein localises to the melanosome. It localises to the cytoskeleton. Its subcellular location is the microtubule organizing center. It is found in the centrosome. The protein resides in the cilium basal body. It catalyses the reaction ATP + H2O = ADP + phosphate + H(+). Its function is as follows. Component of the chaperonin-containing T-complex (TRiC), a molecular chaperone complex that assists the folding of actin, tubulin and other proteins upon ATP hydrolysis. The TRiC complex mediates the folding of WRAP53/TCAB1, thereby regulating telomere maintenance. As part of the TRiC complex may play a role in the assembly of BBSome, a complex involved in ciliogenesis regulating transports vesicles to the cilia. The sequence is that of T-complex protein 1 subunit delta (CCT4) from Bos taurus (Bovine).